We begin with the raw amino-acid sequence, 152 residues long: MKNKTQKNRILINKEVYSKEITKKFLKDITEKILSELNLNNVEISITLTDNERIREINKEWRGKDKPTDVLSFPQDETIGYKYRLLGDVIISLPYAKAQAEEIGLTLREEVLRLLVHGILHLLGYDHETNEEDAKIMFDLQDKIFDKLTCEL.

Zn(2+) is bound by residues His-117, His-121, and His-127.

Belongs to the endoribonuclease YbeY family. Zn(2+) is required as a cofactor.

Its subcellular location is the cytoplasm. Its function is as follows. Single strand-specific metallo-endoribonuclease involved in late-stage 70S ribosome quality control and in maturation of the 3' terminus of the 16S rRNA. In Sulfurihydrogenibium sp. (strain YO3AOP1), this protein is Endoribonuclease YbeY.